We begin with the raw amino-acid sequence, 573 residues long: Potassium-transporting ATPase potassium-binding subunit (573 aa).

10 helical membrane passes run 6–26 (ILFA…GSYI), 66–86 (FFSL…ILLL), 135–155 (ALAV…IALI), 177–197 (VFWI…FQGV), 257–277 (IQMV…GKWV), 283–303 (GWLI…VMTI), 382–402 (IFGG…LAVF), 428–448 (MFAL…AAVI), 493–513 (ITIA…VIML), and 537–557 (FIFA…TIFP).

Belongs to the KdpA family. In terms of assembly, the system is composed of three essential subunits: KdpA, KdpB and KdpC.

The protein resides in the cell inner membrane. Its function is as follows. Part of the high-affinity ATP-driven potassium transport (or Kdp) system, which catalyzes the hydrolysis of ATP coupled with the electrogenic transport of potassium into the cytoplasm. This subunit binds the periplasmic potassium ions and delivers the ions to the membrane domain of KdpB through an intramembrane tunnel. The chain is Potassium-transporting ATPase potassium-binding subunit from Francisella tularensis subsp. mediasiatica (strain FSC147).